The primary structure comprises 215 residues: Deoxyribose-phosphate aldolase (215 aa).

The active-site Proton donor/acceptor is Asp-89. Lys-153 acts as the Schiff-base intermediate with acetaldehyde in catalysis. Lys-182 (proton donor/acceptor) is an active-site residue.

It belongs to the DeoC/FbaB aldolase family. DeoC type 1 subfamily.

It localises to the cytoplasm. The enzyme catalyses 2-deoxy-D-ribose 5-phosphate = D-glyceraldehyde 3-phosphate + acetaldehyde. It functions in the pathway carbohydrate degradation; 2-deoxy-D-ribose 1-phosphate degradation; D-glyceraldehyde 3-phosphate and acetaldehyde from 2-deoxy-alpha-D-ribose 1-phosphate: step 2/2. Catalyzes a reversible aldol reaction between acetaldehyde and D-glyceraldehyde 3-phosphate to generate 2-deoxy-D-ribose 5-phosphate. In Lactiplantibacillus plantarum (strain ATCC BAA-793 / NCIMB 8826 / WCFS1) (Lactobacillus plantarum), this protein is Deoxyribose-phosphate aldolase.